A 1777-amino-acid chain; its full sequence is FERM and PDZ domain-containing protein 3 (1777 aa).

The PDZ domain maps to 21-98 (QVTVHRDPIY…FIVLTVLHTH (78 aa)). An FERM domain is found at 147–461 (NVLKVFLENG…GYCRLLLDSR (315 aa)). Disordered regions lie at residues 491 to 520 (TGGH…TPPP), 555 to 574 (ETRP…QGYE), 622 to 697 (QLGP…GRHL), 832 to 871 (SLGR…QGER), 1014 to 1216 (SAPE…PFRL), 1309 to 1346 (RPQA…LSSP), and 1732 to 1765 (QQQQ…ATVM). Positions 502–511 (YVGSVGTSPR) are enriched in polar residues. The span at 555–564 (ETRPRTKSDP) shows a compositional bias: basic and acidic residues. The segment covering 649-659 (SEEEEEEEDET) has biased composition (acidic residues). 4 stretches are compositionally biased toward polar residues: residues 840-850 (PSLQPIATGQS), 1015-1035 (APET…SSPR), 1046-1056 (HLSQQEDSLPV), and 1094-1111 (LQKQ…QLES). Over residues 1134–1168 (QSPSCQSRSHSPSCQPHGHSPSSQSRGQSPSCQPR) the composition is skewed to low complexity. Residues 1172–1202 (PLRSQAASRQVSTMPSRKLETTLNGAHSTSE) are compositionally biased toward polar residues. Positions 1732–1751 (QQQQQQQQQQQQVAAAAGAA) are enriched in low complexity.

This chain is FERM and PDZ domain-containing protein 3, found in Homo sapiens (Human).